The chain runs to 114 residues: FK506-binding protein 1 (114 aa).

The PPIase FKBP-type domain maps to 26-114 (GDLVTIHYTG…VFDVELLKIN (89 aa)).

It belongs to the FKBP-type PPIase family. FKBP1 subfamily.

It localises to the cytoplasm. The catalysed reaction is [protein]-peptidylproline (omega=180) = [protein]-peptidylproline (omega=0). Its activity is regulated as follows. Inhibited by both FK506 and rapamycin. PPIases accelerate the folding of proteins. It catalyzes the cis-trans isomerization of proline imidic peptide bonds in oligopeptides. The chain is FK506-binding protein 1 (FPR1) from Kluyveromyces lactis (strain ATCC 8585 / CBS 2359 / DSM 70799 / NBRC 1267 / NRRL Y-1140 / WM37) (Yeast).